Consider the following 422-residue polypeptide: Vitamin D3 receptor (422 aa).

The segment at residues 21 to 96 (PRICGVCGDR…IGMMKEFILT (76 aa)) is a DNA-binding region (nuclear receptor). Positions 24, 27, 41, 44, 60, 66, 76, and 79 each coordinate Zn(2+). NR C4-type zinc fingers lie at residues 24-44 (CGVC…CEGC) and 60-84 (CPFN…LKRC). Positions 97–126 (DEEVQRKREMIMKRKEEEALKDSLRPKLSE) are hinge. The region spanning 127 to 418 (EQQHIIAILL…LTPLVLEVFG (292 aa)) is the NR LBD domain. Residue Y143 coordinates calcitriol. Residues 161-185 (VSTGSYSPRPTLSFSGDSSSNSDLY) are disordered. A compositionally biased stretch (polar residues) spans 162–172 (STGSYSPRPTL). Positions 173–182 (SFSGDSSSNS) are enriched in low complexity. S232 lines the calcitriol pocket. Residues 241–259 (KMIPGFRDLTSDDQIVLLK) are interaction with coactivator LXXLL motif. Residues R269, S273, H300, and H392 each coordinate calcitriol. The 9aaTAD signature appears at 411–419 (PLVLEVFGN).

This sequence belongs to the nuclear hormone receptor family. NR1 subfamily. Homodimer in the absence of bound vitamin D3. Heterodimer with RXRA after vitamin D3 binding. Interacts with MED1, NCOA1, NCOA2, NCOA3 and NCOA6 coactivators, leading to a strong increase of transcription of target genes. Interacts with the corepressor NCOR1. Interacts with SNW1. Interacts with IRX4, the interaction does not affect its transactivation activity. Interacts with CRY1. Interacts with CRY2 in a ligand-dependent manner. In terms of processing, ubiquitinated by UBR5, leading to its degradation: UBR5 specifically recognizes and binds ligand-bound VDR when it is not associated with coactivators (NCOAs). In presence of NCOAs, the UBR5-degron is not accessible, preventing its ubiquitination and degradation.

Its subcellular location is the nucleus. It localises to the cytoplasm. Its function is as follows. Nuclear receptor for calcitriol, the active form of vitamin D3 which mediates the action of this vitamin on cells. Enters the nucleus upon vitamin D3 binding where it forms heterodimers with the retinoid X receptor/RXR. The VDR-RXR heterodimers bind to specific response elements on DNA and activate the transcription of vitamin D3-responsive target genes. Plays a central role in calcium homeostasis. Also functions as a receptor for the secondary bile acid lithocholic acid (LCA) and its metabolites. This chain is Vitamin D3 receptor (Vdr), found in Mus musculus (Mouse).